The chain runs to 122 residues: Large ribosomal subunit protein uL14 (122 aa).

It belongs to the universal ribosomal protein uL14 family. Part of the 50S ribosomal subunit. Forms a cluster with proteins L3 and L19. In the 70S ribosome, L14 and L19 interact and together make contacts with the 16S rRNA in bridges B5 and B8.

Functionally, binds to 23S rRNA. Forms part of two intersubunit bridges in the 70S ribosome. In Orientia tsutsugamushi (strain Ikeda) (Rickettsia tsutsugamushi), this protein is Large ribosomal subunit protein uL14.